A 737-amino-acid polypeptide reads, in one-letter code: Ribosome-releasing factor 2, mitochondrial (737 aa).

A mitochondrion-targeting transit peptide spans 1–29 (MLKYALHSGGMPRNRLLRQLSAYIFRRSY). The 280-residue stretch at 31–310 (SNIRNIGILA…AVNTYLPAPE (280 aa)) folds into the tr-type G domain. GTP contacts are provided by residues 40–47 (AHIDAGKT), 104–108 (DTPGH), and 158–161 (NKMD).

It belongs to the TRAFAC class translation factor GTPase superfamily. Classic translation factor GTPase family. EF-G/EF-2 subfamily.

The protein localises to the mitochondrion. Mitochondrial GTPase that mediates the disassembly of ribosomes from messenger RNA at the termination of mitochondrial protein biosynthesis. Not involved in the GTP-dependent ribosomal translocation step during translation elongation. The polypeptide is Ribosome-releasing factor 2, mitochondrial (Drosophila persimilis (Fruit fly)).